The chain runs to 128 residues: MTTNNSTLLDTIQQGFRITVGATASLVETLQDPQKRQGTFQDLQQEWDQRASQWAQKGTTTETEARQYVDQLLAQWRQSLPNPLSKTTATGSNNIIDFATAKRELDRLTEEIATLKGELAQDKPGTEG.

Positions 95–123 (IIDFATAKRELDRLTEEIATLKGELAQDK) form a coiled coil.

It localises to the cellular thylakoid membrane. This is an uncharacterized protein from Synechocystis sp. (strain ATCC 27184 / PCC 6803 / Kazusa).